A 370-amino-acid polypeptide reads, in one-letter code: Glutamate 5-kinase (370 aa).

Lys11 is an ATP binding site. Substrate is bound by residues Ser52, Asp139, and Asn151. ATP contacts are provided by residues 171-172 (TD) and 213-219 (TGGMATK). The 79-residue stretch at 278–356 (TGKLLLDAGA…DQIVQILGYE (79 aa)) folds into the PUA domain.

Belongs to the glutamate 5-kinase family.

The protein resides in the cytoplasm. It catalyses the reaction L-glutamate + ATP = L-glutamyl 5-phosphate + ADP. The protein operates within amino-acid biosynthesis; L-proline biosynthesis; L-glutamate 5-semialdehyde from L-glutamate: step 1/2. Catalyzes the transfer of a phosphate group to glutamate to form L-glutamate 5-phosphate. This Synechococcus sp. (strain ATCC 27144 / PCC 6301 / SAUG 1402/1) (Anacystis nidulans) protein is Glutamate 5-kinase.